The primary structure comprises 330 residues: Short chain dehydrogenase macD (330 aa).

Residues Lys57, Asp86, Asn113, Tyr204, and Lys208 each coordinate NADP(+). The active-site Proton donor is the Tyr204. The active-site Lowers pKa of active site Tyr is the Lys208.

It belongs to the short-chain dehydrogenases/reductases (SDR) family.

It participates in secondary metabolite biosynthesis; terpenoid biosynthesis. Functionally, short chain dehydrogenase; part of the gene cluster that mediates the biosynthesis of macrophorins, isoprenoid epoxycyclohexenones containing cyclized drimane moieties. The first step of the pathway is the synthesis of 6-methylsalicylic acid (6-MSA) by the polyketide synthase macA. 6-MSA is then converted to m-cresol by the decarboxylase macB. The cytochrome P450 monooxygenase macC then catalyzes the oxidation of m-cresol to toluquinol. Epoxidation of toluquinol is then performed by the short chain dehydrogenase macD, with the help of macE, and a further prenylation by macG leads to 7-deacetoxyyanuthone A. The next step is the hydroxylation of C-22 of 7-deacetoxyyanuthone A by the cytochrome P450 monooxygenase macH to yield 22-deacetylyanuthone A. O-Mevalon transferase macI then attaches mevalon to the hydroxyl group of 22-deacetylyanuthone A to produce yanuthone E. The terpene cyclase macJ catalyzes the cyclization of 22-deacetylyanuthone A to macrophorin A. MacJ is also able to catalyze cyclization of yanuthone E and 7-deacetoxyyanuthone A to their corresponding macrophorins. The macJ products can be further modified by macH and macJ, as well as by the FAD-dependent monooxygenase macF, to produce additional macrophorins, including 4'-oxomacrophorin A, 4'-oxomacrophorin D and 4'-oxomacrophorin E. The chain is Short chain dehydrogenase macD from Penicillium terrestre.